A 211-amino-acid chain; its full sequence is Lipoprotein signal peptidase (211 aa).

3 consecutive transmembrane segments (helical) span residues 12–32, 96–116, and 127–147; these read LLAL…YLAV, AFRN…ILHY, and LQVA…DRLA. Active-site residues include D153 and D174. Residues 167–187 form a helical membrane-spanning segment; that stretch reads WPTFNIADSLIVVGVALLVLH.

The protein belongs to the peptidase A8 family.

The protein localises to the cell inner membrane. The catalysed reaction is Release of signal peptides from bacterial membrane prolipoproteins. Hydrolyzes -Xaa-Yaa-Zaa-|-(S,diacylglyceryl)Cys-, in which Xaa is hydrophobic (preferably Leu), and Yaa (Ala or Ser) and Zaa (Gly or Ala) have small, neutral side chains.. Its pathway is protein modification; lipoprotein biosynthesis (signal peptide cleavage). Its function is as follows. This protein specifically catalyzes the removal of signal peptides from prolipoproteins. The sequence is that of Lipoprotein signal peptidase from Anaeromyxobacter sp. (strain Fw109-5).